A 37-amino-acid chain; its full sequence is Cytochrome b6-f complex subunit 5 (37 aa).

The helical transmembrane segment at 5–25 (LLSGIVLGLIPVTLAGLFVTA) threads the bilayer.

It belongs to the PetG family. As to quaternary structure, the 4 large subunits of the cytochrome b6-f complex are cytochrome b6, subunit IV (17 kDa polypeptide, PetD), cytochrome f and the Rieske protein, while the 4 small subunits are PetG, PetL, PetM and PetN. The complex functions as a dimer.

Its subcellular location is the plastid. It localises to the chloroplast thylakoid membrane. Its function is as follows. Component of the cytochrome b6-f complex, which mediates electron transfer between photosystem II (PSII) and photosystem I (PSI), cyclic electron flow around PSI, and state transitions. PetG is required for either the stability or assembly of the cytochrome b6-f complex. This Chlorokybus atmophyticus (Soil alga) protein is Cytochrome b6-f complex subunit 5.